The following is a 164-amino-acid chain: Large ribosomal subunit protein uL10 (164 aa).

The protein belongs to the universal ribosomal protein uL10 family. As to quaternary structure, part of the ribosomal stalk of the 50S ribosomal subunit. The N-terminus interacts with L11 and the large rRNA to form the base of the stalk. The C-terminus forms an elongated spine to which L12 dimers bind in a sequential fashion forming a multimeric L10(L12)X complex.

Functionally, forms part of the ribosomal stalk, playing a central role in the interaction of the ribosome with GTP-bound translation factors. In Helicobacter pylori (strain ATCC 700392 / 26695) (Campylobacter pylori), this protein is Large ribosomal subunit protein uL10 (rplJ).